A 182-amino-acid polypeptide reads, in one-letter code: MALSREEIASRYSKALFAYAQDANSLDAVHEDMNVLLQVAKENPDMLRLLSDPIIRKNQKEEFLSSFSDKFSSETKNFLDFLLEYRRFESLTAIIEAFNTLYDEYKNIASGTAVSAIKLNEDELSRISQAYAKKYGFKELILTNKVDPSILGGIILKVGDRIIDGSIRTRLQQIREQLIENR.

This sequence belongs to the ATPase delta chain family. F-type ATPases have 2 components, F(1) - the catalytic core - and F(0) - the membrane proton channel. F(1) has five subunits: alpha(3), beta(3), gamma(1), delta(1), epsilon(1). F(0) has three main subunits: a(1), b(2) and c(10-14). The alpha and beta chains form an alternating ring which encloses part of the gamma chain. F(1) is attached to F(0) by a central stalk formed by the gamma and epsilon chains, while a peripheral stalk is formed by the delta and b chains.

Its subcellular location is the cell membrane. Its function is as follows. F(1)F(0) ATP synthase produces ATP from ADP in the presence of a proton or sodium gradient. F-type ATPases consist of two structural domains, F(1) containing the extramembraneous catalytic core and F(0) containing the membrane proton channel, linked together by a central stalk and a peripheral stalk. During catalysis, ATP synthesis in the catalytic domain of F(1) is coupled via a rotary mechanism of the central stalk subunits to proton translocation. This protein is part of the stalk that links CF(0) to CF(1). It either transmits conformational changes from CF(0) to CF(1) or is implicated in proton conduction. This Lactobacillus johnsonii (strain CNCM I-12250 / La1 / NCC 533) protein is ATP synthase subunit delta.